Consider the following 155-residue polypeptide: Rusticyanin (155 aa).

A Plastocyanin-like domain is found at 53–155; that stretch reads SFEVHDKKNP…TGMFGKIIVK (103 aa). Cu cation contacts are provided by H85, C138, H143, and M148.

As to quaternary structure, monomer. Cu cation is required as a cofactor.

It is found in the periplasm. Functionally, electron carrier from cytochrome c552 to the A-type oxidase. In Acidithiobacillus ferrooxidans (Thiobacillus ferrooxidans), this protein is Rusticyanin (rus).